Consider the following 235-residue polypeptide: Repeat element protein (235 aa).

The interval 57-235 (IFQELLERLS…ARRKKCRFSQ (179 aa)) is repeat element.

The protein is Repeat element protein of Campoletis sonorensis (CsIV).